The chain runs to 206 residues: uncharacterized protein (206 aa).

The signal sequence occupies residues 1–22; sequence MPKLRLIGLTLLALSATAVSHA. Positions 23–89 constitute an SH3b domain; the sequence is EETRYVSDEL…IPLKQLSTEP (67 aa). The helical transmembrane segment at 169-191 threads the bilayer; the sequence is IIMQWFMYGGGVLGLGLLLGLVL.

The protein to H.influenzae HI_1605.

It localises to the membrane. This is an uncharacterized protein from Escherichia coli O157:H7.